Consider the following 324-residue polypeptide: Putative S-adenosyl-L-methionine-dependent methyltransferase MMAR_1059 (324 aa).

S-adenosyl-L-methionine is bound by residues Asp-138 and 167-168 (DL).

This sequence belongs to the UPF0677 family.

Its function is as follows. Exhibits S-adenosyl-L-methionine-dependent methyltransferase activity. This is Putative S-adenosyl-L-methionine-dependent methyltransferase MMAR_1059 from Mycobacterium marinum (strain ATCC BAA-535 / M).